The following is a 66-amino-acid chain: U-scoloptoxin(24)-Er2a (66 aa).

A signal peptide spans 1 to 23; the sequence is MVKPLHCLIGIVLFLAVLNAGNG. The interval 43–66 is disordered; sequence SLFHGNQRKKRSEEKRFSDMEQTK. Basic and acidic residues predominate over residues 53-66; it reads RSEEKRFSDMEQTK.

Belongs to the scoloptoxin-24 family. In terms of tissue distribution, expressed by the venom gland.

It is found in the secreted. This is U-scoloptoxin(24)-Er2a from Ethmostigmus rubripes (Giant centipede).